A 389-amino-acid chain; its full sequence is Na(+)/H(+) antiporter NhaA (389 aa).

11 helical membrane passes run 14–34 (AGGI…NSPL), 59–79 (LILW…GLEV), 95–115 (SLPT…YLLF), 124–144 (AGWA…MALL), 154–174 (VFLL…IALF), 177–197 (TDLS…LVGL), 213–233 (LILW…GVII), 257–277 (PWST…VYVG), 292–312 (IALG…YIAV), 328–348 (IAPV…IASL), and 363–383 (LGTL…LSKV).

The protein belongs to the NhaA Na(+)/H(+) (TC 2.A.33) antiporter family.

Its subcellular location is the cell inner membrane. It carries out the reaction Na(+)(in) + 2 H(+)(out) = Na(+)(out) + 2 H(+)(in). Its function is as follows. Na(+)/H(+) antiporter that extrudes sodium in exchange for external protons. This is Na(+)/H(+) antiporter NhaA from Shewanella baltica (strain OS223).